A 254-amino-acid chain; its full sequence is MPEGDGVPRETPSPSVVPESPVEVPVEAVARVFGDRADRAATYRELLATAGVERGLIGPREVPRLWDRHLLNCAYLGEVIDQGSSVIDLGSGAGLPGIPLALARPDLQIRLVEPLERRYTFLREAITELGLRDQVAVARGRAEDVRGEFSASVVTARAVAPLKTLYGWALPLVVTGGHLVAIKGRSASDEIAAAGETLRQMGVTAAPEVLSVGPDDGTGTTVVRVARGHGPLRAATAPAPPGAAKRRPGKGNRR.

The interval 1–21 (MPEGDGVPRETPSPSVVPESP) is disordered. A compositionally biased stretch (low complexity) spans 9-21 (RETPSPSVVPESP). S-adenosyl-L-methionine-binding positions include Gly90, Leu95, 142–143 (AE), and Arg157. Residues 230–254 (GPLRAATAPAPPGAAKRRPGKGNRR) form a disordered region. Residues 244 to 254 (AKRRPGKGNRR) show a composition bias toward basic residues.

It belongs to the methyltransferase superfamily. RNA methyltransferase RsmG family.

The protein localises to the cytoplasm. Functionally, specifically methylates the N7 position of guanine in position 518 of 16S rRNA. This is Ribosomal RNA small subunit methyltransferase G from Kineococcus radiotolerans (strain ATCC BAA-149 / DSM 14245 / SRS30216).